The following is a 247-amino-acid chain: Pyridoxine 5'-phosphate synthase (247 aa).

Position 9 (asparagine 9) interacts with 3-amino-2-oxopropyl phosphate. A 1-deoxy-D-xylulose 5-phosphate-binding site is contributed by aspartate 11 to histidine 12. Arginine 20 serves as a coordination point for 3-amino-2-oxopropyl phosphate. Residue histidine 45 is the Proton acceptor of the active site. 2 residues coordinate 1-deoxy-D-xylulose 5-phosphate: arginine 47 and histidine 52. Glutamate 72 acts as the Proton acceptor in catalysis. Threonine 102 is a binding site for 1-deoxy-D-xylulose 5-phosphate. The active-site Proton donor is the histidine 193. 3-amino-2-oxopropyl phosphate-binding positions include glycine 194 and glycine 215 to histidine 216.

It belongs to the PNP synthase family. In terms of assembly, homooctamer; tetramer of dimers.

It localises to the cytoplasm. It catalyses the reaction 3-amino-2-oxopropyl phosphate + 1-deoxy-D-xylulose 5-phosphate = pyridoxine 5'-phosphate + phosphate + 2 H2O + H(+). It participates in cofactor biosynthesis; pyridoxine 5'-phosphate biosynthesis; pyridoxine 5'-phosphate from D-erythrose 4-phosphate: step 5/5. Functionally, catalyzes the complicated ring closure reaction between the two acyclic compounds 1-deoxy-D-xylulose-5-phosphate (DXP) and 3-amino-2-oxopropyl phosphate (1-amino-acetone-3-phosphate or AAP) to form pyridoxine 5'-phosphate (PNP) and inorganic phosphate. The sequence is that of Pyridoxine 5'-phosphate synthase from Blochmanniella floridana.